The chain runs to 453 residues: tRNA modification GTPase MnmE (453 aa).

(6S)-5-formyl-5,6,7,8-tetrahydrofolate-binding residues include R22, E79, and K119. Residues G215–G376 enclose the TrmE-type G domain. N225 is a K(+) binding site. GTP is bound by residues N225 to S230, T244 to T250, D269 to G272, and N334 to D337. S229 is a Mg(2+) binding site. K(+)-binding residues include T244, I246, and T249. T250 serves as a coordination point for Mg(2+). K453 contributes to the (6S)-5-formyl-5,6,7,8-tetrahydrofolate binding site.

This sequence belongs to the TRAFAC class TrmE-Era-EngA-EngB-Septin-like GTPase superfamily. TrmE GTPase family. In terms of assembly, homodimer. Heterotetramer of two MnmE and two MnmG subunits. Requires K(+) as cofactor.

The protein localises to the cytoplasm. In terms of biological role, exhibits a very high intrinsic GTPase hydrolysis rate. Involved in the addition of a carboxymethylaminomethyl (cmnm) group at the wobble position (U34) of certain tRNAs, forming tRNA-cmnm(5)s(2)U34. The protein is tRNA modification GTPase MnmE of Shewanella sp. (strain MR-7).